A 98-amino-acid polypeptide reads, in one-letter code: NADH-ubiquinone oxidoreductase chain 4L (98 aa).

The next 3 helical transmembrane spans lie at 1–21, 26–46, and 59–79; these read MTPTHFSLNAAFMLGLAGLTF, LLSALLCLEGMMLSLFISMAL, and APMLLLAFSACEASAGLALLV.

This sequence belongs to the complex I subunit 4L family. In terms of assembly, core subunit of respiratory chain NADH dehydrogenase (Complex I) which is composed of 45 different subunits.

It localises to the mitochondrion inner membrane. The catalysed reaction is a ubiquinone + NADH + 5 H(+)(in) = a ubiquinol + NAD(+) + 4 H(+)(out). Core subunit of the mitochondrial membrane respiratory chain NADH dehydrogenase (Complex I) which catalyzes electron transfer from NADH through the respiratory chain, using ubiquinone as an electron acceptor. Part of the enzyme membrane arm which is embedded in the lipid bilayer and involved in proton translocation. This is NADH-ubiquinone oxidoreductase chain 4L (mt-nd4l) from Danio rerio (Zebrafish).